Consider the following 449-residue polypeptide: NADP-specific glutamate dehydrogenase (449 aa).

Residues K92, Q113, and K116 each contribute to the substrate site. The active-site Proton donor is K128. G167 provides a ligand contact to substrate. NADP(+)-binding residues include T211 and N242. Position 380 (S380) interacts with substrate.

This sequence belongs to the Glu/Leu/Phe/Val dehydrogenases family. Homohexamer.

The catalysed reaction is L-glutamate + NADP(+) + H2O = 2-oxoglutarate + NH4(+) + NADPH + H(+). Functionally, catalyzes the reversible oxidative deamination of glutamate to alpha-ketoglutarate and ammonia. The polypeptide is NADP-specific glutamate dehydrogenase (gdhA) (Haemophilus influenzae (strain ATCC 51907 / DSM 11121 / KW20 / Rd)).